The chain runs to 635 residues: MKLENTLFTLGALGSISAALVIPNLENAADHHELINKEDHHERPRKVEFTKDDDEEPSDSEDKEHGKFHKKGRKGQDKESPEFNGKRASGSHGSAHEGGKGMKPKHESSNDDDNDDKKKKPHHKGGCHENKVEEKKMKGKKVKGKKHHEKTLEKGRHHNRLAPLVSTAQFNPDAISKIIPNRYIIVFKRGAPQEEIDFHKENVQQAQLQSVENLSAEDAFFISTKDTSLSTSEAGGIQDSFNIDNLFSGYIGYFTQEIVDLIRQNPLVDFVERDSIVEATEFDTQNSAPWGLARISHRERLNLGSFNKYLYDDDAGRGVTSYVIDTGVNINHKDFEKRAIWGKTIPLNDEDLDGNGHGTHCAGTIASKHYGVAKNANVVAVKVLRSNGSGTMSDVVKGVEYAAKAHQKEAQEKKKGFKGSTANMSLGGGKSPALDLAVNAAVEVGIHFAVAAGNENQDACNTSPASADKAITVGASTLSDDRAYFSNWGKCVDVFAPGLNILSTYIGSDDATATLSGTSMASPHVAGLLTYFLSLQPGSDSEFFELGQDSLTPQQLKKKLIHYSTKDILFDIPEDTPNVLIYNGGGQDLSAFWNDTKKSHSSGFKQELNMDEFIGSKTDLIFDQVRDILDKLNII.

Residues 1 to 19 (MKLENTLFTLGALGSISAA) form the signal peptide. A propeptide spanning residues 20 to 280 (LVIPNLENAA…VERDSIVEAT (261 aa)) is cleaved from the precursor. Basic and acidic residues-rich tracts occupy residues 35–50 (INKE…VEFT), 74–85 (KGQDKESPEFNG), 94–109 (SAHE…HESS), and 126–136 (GCHENKVEEKK). Residues 35–155 (INKEDHHERP…KHHEKTLEKG (121 aa)) are disordered. The segment covering 137-155 (MKGKKVKGKKHHEKTLEKG) has biased composition (basic residues). Residues 182-278 (RYIIVFKRGA…DFVERDSIVE (97 aa)) enclose the Inhibitor I9 domain. One can recognise a Peptidase S8 domain in the interval 289–614 (PWGLARISHR…KQELNMDEFI (326 aa)). Catalysis depends on charge relay system residues D325 and H357. The cysteines at positions 460 and 491 are disulfide-linked. The Charge relay system role is filled by S519. The propeptide occupies 575–635 (DTPNVLIYNG…RDILDKLNII (61 aa)). N594 is a glycosylation site (N-linked (GlcNAc...) asparagine).

Belongs to the peptidase S8 family. Post-translationally, activated by N- and C-terminal proteolytic cleavage. Protease B (PrB/PRB1) processing requires at least 4 cleavages. First, the signal peptide is removed from the 76 kDa preproprotease B by signal peptidase in the ER. Then, PrB removes its own Pro-region (in trans) at the N-terminus, producing a 39 kDa form before exiting the ER. In the Golgi complex, the C-terminal Post-region of the 40 kDa proprotease B undergoes protease A (PrA/PEP4)-mediated processing to a 37 kDa intermediate, which in turn is quickly processed again by PrB in trans to yield the 31 kDa mature PrB. In terms of processing, glycosylated. Preproprotease B is a 76 kDa unglycosylated precursor that enters the endoplasmic reticulum (ER), where it receives one Asn-linked and an undetermined number of non-Asn-linked carbohydrate side chains. In the Golgi complex, the 39 kDa form becomes 40 kDa, due to elaboration of the Asn-linked side chain. The ultimate processing step removes a peptide containing the Asn-linked chain. Mature PrB has only non-Asn-linked carbohydrates.

It is found in the vacuole. It carries out the reaction Hydrolysis of proteins with broad specificity, and of Bz-Arg-OEt &gt; Ac-Tyr-OEt. Does not hydrolyze peptide amides.. Functionally, vacuolar proteinase B involved in protein degradation in the vacuole. Among other substrates, acts on carboxypeptidase Y (cpY/PRC1) to activate it by processing its Pro-peptide. Required for meiosis and spore formation, and for optimal survival in stationary phase. This chain is Cerevisin (PRB1), found in Saccharomyces cerevisiae (strain ATCC 204508 / S288c) (Baker's yeast).